A 77-amino-acid polypeptide reads, in one-letter code: Large ribosomal subunit protein bL28 (77 aa).

Belongs to the bacterial ribosomal protein bL28 family.

In Ralstonia nicotianae (strain ATCC BAA-1114 / GMI1000) (Ralstonia solanacearum), this protein is Large ribosomal subunit protein bL28.